Consider the following 885-residue polypeptide: DNA-directed RNA polymerase subunit Rpo1N (885 aa).

8 residues coordinate Zn(2+): C60, C63, C70, H73, C100, C103, C150, and C153. Mg(2+) contacts are provided by D464, D466, and D468.

It belongs to the RNA polymerase beta' chain family. Part of the RNA polymerase complex. Mg(2+) is required as a cofactor. Zn(2+) serves as cofactor.

The protein localises to the cytoplasm. The enzyme catalyses RNA(n) + a ribonucleoside 5'-triphosphate = RNA(n+1) + diphosphate. DNA-dependent RNA polymerase (RNAP) catalyzes the transcription of DNA into RNA using the four ribonucleoside triphosphates as substrates. Forms the clamp head domain. The sequence is that of DNA-directed RNA polymerase subunit Rpo1N from Thermoplasma acidophilum (strain ATCC 25905 / DSM 1728 / JCM 9062 / NBRC 15155 / AMRC-C165).